A 431-amino-acid chain; its full sequence is Enolase (431 aa).

Glutamine 163 is a (2R)-2-phosphoglycerate binding site. The active-site Proton donor is glutamate 205. Residues aspartate 242, glutamate 288, and aspartate 315 each coordinate Mg(2+). Positions 340, 369, 370, and 391 each coordinate (2R)-2-phosphoglycerate. The Proton acceptor role is filled by lysine 340.

The protein belongs to the enolase family. It depends on Mg(2+) as a cofactor.

The protein localises to the cytoplasm. It is found in the secreted. The protein resides in the cell surface. The catalysed reaction is (2R)-2-phosphoglycerate = phosphoenolpyruvate + H2O. Its pathway is carbohydrate degradation; glycolysis; pyruvate from D-glyceraldehyde 3-phosphate: step 4/5. Functionally, catalyzes the reversible conversion of 2-phosphoglycerate (2-PG) into phosphoenolpyruvate (PEP). It is essential for the degradation of carbohydrates via glycolysis. The sequence is that of Enolase from Bacillus cereus (strain AH187).